The primary structure comprises 417 residues: Probable sugar-binding periplasmic protein (417 aa).

A signal peptide spans 1–21; sequence MLRKLLIGTALATSFAFSAHA.

This sequence belongs to the bacterial solute-binding protein 1 family.

The protein localises to the periplasm. Functionally, part of a binding-protein-dependent transport system for a sugar. The chain is Probable sugar-binding periplasmic protein from Mesorhizobium japonicum (strain LMG 29417 / CECT 9101 / MAFF 303099) (Mesorhizobium loti (strain MAFF 303099)).